The sequence spans 476 residues: Sulfate adenylyltransferase subunit 1 (476 aa).

One can recognise a tr-type G domain in the interval 17–232 (KDLLRLLTAG…LETVHIDSDN (216 aa)). A G1 region spans residues 26–33 (GSVDDGKS). 26–33 (GSVDDGKS) contributes to the GTP binding site. Positions 84–88 (GITID) are G2. The interval 105–108 (DTPG) is G3. Residues 105 to 109 (DTPGH) and 160 to 163 (NKMD) contribute to the GTP site. The segment at 160 to 163 (NKMD) is G4. Positions 197–199 (SAL) are G5.

The protein belongs to the TRAFAC class translation factor GTPase superfamily. Classic translation factor GTPase family. CysN/NodQ subfamily. Heterodimer composed of CysD, the smaller subunit, and CysN.

The enzyme catalyses sulfate + ATP + H(+) = adenosine 5'-phosphosulfate + diphosphate. It participates in sulfur metabolism; hydrogen sulfide biosynthesis; sulfite from sulfate: step 1/3. Functionally, with CysD forms the ATP sulfurylase (ATPS) that catalyzes the adenylation of sulfate producing adenosine 5'-phosphosulfate (APS) and diphosphate, the first enzymatic step in sulfur assimilation pathway. APS synthesis involves the formation of a high-energy phosphoric-sulfuric acid anhydride bond driven by GTP hydrolysis by CysN coupled to ATP hydrolysis by CysD. This Bacteroides fragilis (strain YCH46) protein is Sulfate adenylyltransferase subunit 1.